The following is a 399-amino-acid chain: Cyclic dehypoxanthine futalosine synthase (399 aa).

A Radical SAM core domain is found at 56-288 (ATYIIERNIN…IAIARVFLDN (233 aa)). 3 residues coordinate [4Fe-4S] cluster: Cys70, Cys74, and Cys77.

Belongs to the radical SAM superfamily. MqnC family. [4Fe-4S] cluster serves as cofactor.

The catalysed reaction is dehypoxanthine futalosine + S-adenosyl-L-methionine = cyclic dehypoxanthinylfutalosinate + 5'-deoxyadenosine + L-methionine + H(+). Its pathway is quinol/quinone metabolism; menaquinone biosynthesis. Functionally, radical SAM enzyme that catalyzes the cyclization of dehypoxanthine futalosine (DHFL) into cyclic dehypoxanthine futalosine (CDHFL), a step in the biosynthesis of menaquinone (MK, vitamin K2). The chain is Cyclic dehypoxanthine futalosine synthase from Streptomyces coelicolor (strain ATCC BAA-471 / A3(2) / M145).